The sequence spans 141 residues: Probable mitochondrial pyruvate carrier 1 (141 aa).

The next 2 helical transmembrane spans lie at 31–52 (YLCS…AAIL) and 60–82 (LISG…YAWM).

Belongs to the mitochondrial pyruvate carrier (MPC) (TC 2.A.105) family. As to quaternary structure, the functional 150 kDa pyruvate import complex is a heteromer of mpc1 and mpc2.

The protein resides in the mitochondrion. The protein localises to the mitochondrion inner membrane. Its function is as follows. Mediates the uptake of pyruvate into mitochondria. This is Probable mitochondrial pyruvate carrier 1 from Schizosaccharomyces pombe (strain 972 / ATCC 24843) (Fission yeast).